The sequence spans 371 residues: O-antigen chain mannosyltransferase C (371 aa).

The protein belongs to the glycosyltransferase group 1 family. Glycosyltransferase 4 subfamily.

It catalyses the reaction N-acetyl-alpha-D-glucosaminyl-di-trans,octa-cis-undecaprenyl diphosphate + GDP-alpha-D-mannose = alpha-D-mannosyl-(1-&gt;3)-N-acetyl-alpha-D-glucosaminyl-di-trans,octa-cis-undecaprenyl diphosphate + GDP + H(+). It participates in bacterial outer membrane biogenesis; LPS O-antigen biosynthesis. In terms of biological role, mannosyltransferase involved in the biosynthesis of the repeat unit of the lipopolysaccharide (LPS) O-antigen region. Catalyzes the transfer of a single alpha-(1-&gt;3)-linked mannose residue to the acceptor N-acetyl-glucosaminyl-diphospho-undecaprenol during the synthesis of the adapter region. The protein is O-antigen chain mannosyltransferase C of Escherichia coli.